We begin with the raw amino-acid sequence, 624 residues long: Chaperone protein HtpG (624 aa).

Residues 1-336 (MKGQETRGFQ…SSDLSLNVSR (336 aa)) are a; substrate-binding. A b region spans residues 337 to 552 (EILQDSTVTR…ADEMSTQMAK (216 aa)). Residues 553–624 (LFAAAGQKVP…IRRMNQLLVS (72 aa)) form a c region.

It belongs to the heat shock protein 90 family. As to quaternary structure, homodimer.

The protein localises to the cytoplasm. Its function is as follows. Molecular chaperone. Has ATPase activity. The protein is Chaperone protein HtpG of Shigella dysenteriae serotype 1 (strain Sd197).